Consider the following 493-residue polypeptide: Probable cytochrome P450 313a2 (493 aa).

C438 lines the heme pocket.

Belongs to the cytochrome P450 family. Requires heme as cofactor.

The protein resides in the endoplasmic reticulum membrane. It is found in the microsome membrane. In terms of biological role, may be involved in the metabolism of insect hormones and in the breakdown of synthetic insecticides. The polypeptide is Probable cytochrome P450 313a2 (Cyp313a2) (Drosophila melanogaster (Fruit fly)).